The following is a 224-amino-acid chain: Protein DEHYDRATION-INDUCED 19 homolog 4 (224 aa).

Positions Met-1 to Phe-12 are enriched in polar residues. Residues Met-1–Gln-23 form a disordered region. Over residues Ser-13–Gln-23 the composition is skewed to low complexity. Thr-117 carries the post-translational modification Phosphothreonine.

Belongs to the Di19 family. In terms of processing, phosphorylated in vitro by CPK3 or CPK11. As to expression, expressed in seedlings, roots, leaves, stems, flowers and siliques.

Its subcellular location is the cytoplasm. It localises to the perinuclear region. In Arabidopsis thaliana (Mouse-ear cress), this protein is Protein DEHYDRATION-INDUCED 19 homolog 4 (DI19-4).